We begin with the raw amino-acid sequence, 492 residues long: Putative transporter SVOPL (492 aa).

A run of 10 helical transmembrane segments spans residues 48 to 68 (IALF…IMLI), 86 to 106 (VALV…LFGL), 121 to 141 (FLWG…IWFV), 179 to 199 (VFWL…IPTI), 203 to 223 (WLIR…KFIP), 281 to 301 (TLQI…VILA), 348 to 368 (IIST…INFL), 383 to 403 (LFFL…FLFM), 429 to 449 (ALGM…APFI), and 458 to 478 (ILGA…SAFT).

The protein belongs to the major facilitator superfamily.

It is found in the membrane. This is Putative transporter SVOPL (SVOPL) from Homo sapiens (Human).